The following is a 455-amino-acid chain: Gamma-aminobutyric acid receptor subunit alpha-1 (455 aa).

The signal sequence occupies residues 1-27 (MKRLLVLCDCLWAWSLLLNALTERSYG). Topologically, residues 28–253 (QTSSQDELKD…FHLKRKIGYF (226 aa)) are extracellular. Residue asparagine 38 is glycosylated (N-linked (GlcNAc...) asparagine). Residue arginine 94 participates in 4-aminobutanoate binding. Asparagine 138 carries an N-linked (GlcNAc...) asparagine glycan. Threonine 157 contacts 4-aminobutanoate. Cysteine 166 and cysteine 180 are oxidised to a cystine. Residues 254-274 (VIQTYLPCIMTVILSQVSFWL) traverse the membrane as a helical segment. Residues 275 to 279 (NRESV) are Cytoplasmic-facing. A helical transmembrane segment spans residues 280–301 (PARTVFGVTTVLTMTTLSISAR). The Extracellular segment spans residues 302-311 (NSLPKVAYAT). Residues 312–333 (AMDWFIAVCYAFVFSALIEFAT) form a helical membrane-spanning segment. At 334 to 420 (VNYFTKRGYA…TFNSVSKIDR (87 aa)) the chain is on the cytoplasmic side. The chain crosses the membrane as a helical span at residues 421 to 440 (LSRIAFPLLFGIFNLVYWAT). Topologically, residues 441–455 (YLNREPQLKAPTPHQ) are extracellular.

This sequence belongs to the ligand-gated ion channel (TC 1.A.9) family. Gamma-aminobutyric acid receptor (TC 1.A.9.5) subfamily. GABRA1 sub-subfamily. As to quaternary structure, heteropentamer, formed by a combination of alpha (GABRA1-6), beta (GABRB1-3), gamma (GABRG1-3), delta (GABRD), epsilon (GABRE), rho (GABRR1-3), pi (GABRP) and theta (GABRQ) subunits, each subunit exhibiting distinct physiological and pharmacological properties. Brain.

It is found in the postsynaptic cell membrane. Its subcellular location is the cell membrane. The enzyme catalyses chloride(in) = chloride(out). With respect to regulation, allosterically activated by benzodiazepines, the neuroanesthetic alphaxalone and pentobarbital. Inhibited by the antagonist bicuculline. Potentiated by histamine. Alpha subunit of the heteropentameric ligand-gated chloride channel gated by gamma-aminobutyric acid (GABA), a major inhibitory neurotransmitter in the brain. GABA-gated chloride channels, also named GABA(A) receptors (GABAAR), consist of five subunits arranged around a central pore and contain GABA active binding site(s) located at the alpha and beta subunit interface(s). When activated by GABA, GABAARs selectively allow the flow of chloride anions across the cell membrane down their electrochemical gradient. Chloride influx into the postsynaptic neuron following GABAAR opening decreases the neuron ability to generate a new action potential, thereby reducing nerve transmission. The GABAARs can also initiate the formation of functional inhibitory GABAergic synapses. GABAARs function also as histamine receptor where histamine binds at the interface of two neighboring beta subunits and potentiates GABA response. The sequence is that of Gamma-aminobutyric acid receptor subunit alpha-1 (GABRA1) from Gallus gallus (Chicken).